Here is a 475-residue protein sequence, read N- to C-terminus: TOM1-like protein 1 (475 aa).

The VHS domain occupies 22–154; sequence ATFAGVQTED…DLLKKGVQFP (133 aa). Residues 155-175 form a disordered region; the sequence is PLDGEPETKQEAGQISPSRPT. Residues 165-175 are compositionally biased toward polar residues; the sequence is EAGQISPSRPT. Serine 170 carries the post-translational modification Phosphoserine. Residues 199-287 form the GAT domain; it reads EQIGKLHSEL…AILGYERFTR (89 aa). The interval 296-317 is disordered; that stretch reads KRNPTEANQTSSEPSAPSCDLL. The span at 300-310 shows a compositional bias: polar residues; that stretch reads TEANQTSSEPS. Position 313 is a phosphoserine (serine 313). The interaction with GRB2 stretch occupies residues 392–395; that stretch reads YDNF. Residues 421–425 carry the SH3-binding motif; the sequence is LPPLP. The tract at residues 442–445 is interaction with PIK3R1; that stretch reads YEVM. Tyrosine 458 bears the Phosphotyrosine mark. Residues 458-461 carry the SH2-binding motif; sequence YEEI.

The protein belongs to the TOM1 family. In terms of assembly, interacts with the SH2 and SH3 domains of FYN when phosphorylated. Also interacts with GRB2 and PIK3R1 when phosphorylated. Interacts with LYN. Phosphorylated on tyrosines by FYN and LYN.

It is found in the golgi apparatus. It localises to the golgi stack. Its subcellular location is the endosome membrane. The protein localises to the cytoplasm. The protein resides in the membrane. Probable adapter protein involved in signaling pathways. Interacts with the SH2 and SH3 domains of various signaling proteins when it is phosphorylated. May promote FYN activation, possibly by disrupting intramolecular SH3-dependent interactions. This Rattus norvegicus (Rat) protein is TOM1-like protein 1 (Tom1l1).